Here is a 301-residue protein sequence, read N- to C-terminus: Phosphatidylglycerol--prolipoprotein diacylglyceryl transferase (301 aa).

4 helical membrane passes run 10–30 (IAFS…LASF), 57–77 (LLFY…MLFY), 92–112 (VWEG…AVAW), and 119–139 (LQMF…LGFG). R140 lines the a 1,2-diacyl-sn-glycero-3-phospho-(1'-sn-glycerol) pocket. A run of 3 helical transmembrane segments spans residues 202-222 (PSQL…LWLF), 230-250 (YAVS…VEFV), and 264-284 (LTRG…LFWL).

The protein belongs to the Lgt family.

The protein resides in the cell inner membrane. The catalysed reaction is L-cysteinyl-[prolipoprotein] + a 1,2-diacyl-sn-glycero-3-phospho-(1'-sn-glycerol) = an S-1,2-diacyl-sn-glyceryl-L-cysteinyl-[prolipoprotein] + sn-glycerol 1-phosphate + H(+). The protein operates within protein modification; lipoprotein biosynthesis (diacylglyceryl transfer). Catalyzes the transfer of the diacylglyceryl group from phosphatidylglycerol to the sulfhydryl group of the N-terminal cysteine of a prolipoprotein, the first step in the formation of mature lipoproteins. The chain is Phosphatidylglycerol--prolipoprotein diacylglyceryl transferase from Xylella fastidiosa (strain 9a5c).